Reading from the N-terminus, the 77-residue chain is Acyl carrier protein (77 aa).

Residues 2 to 77 (SSIEERVNKI…SAVDYIKAHS (76 aa)) form the Carrier domain. Serine 37 bears the O-(pantetheine 4'-phosphoryl)serine mark.

Belongs to the acyl carrier protein (ACP) family. In terms of processing, 4'-phosphopantetheine is transferred from CoA to a specific serine of apo-ACP by AcpS. This modification is essential for activity because fatty acids are bound in thioester linkage to the sulfhydryl of the prosthetic group.

The protein resides in the cytoplasm. Its pathway is lipid metabolism; fatty acid biosynthesis. In terms of biological role, carrier of the growing fatty acid chain in fatty acid biosynthesis. This Alcanivorax borkumensis (strain ATCC 700651 / DSM 11573 / NCIMB 13689 / SK2) protein is Acyl carrier protein.